We begin with the raw amino-acid sequence, 206 residues long: Pyridoxine/pyridoxamine 5'-phosphate oxidase (206 aa).

FMN is bound by residues 53 to 58, 68 to 69, K75, and Q97; these read RMVLLK and YT. Residue K58 coordinates substrate. Substrate contacts are provided by Y115, R119, and S123. Residues 132–133 and W177 contribute to the FMN site; that span reads QS. 183-185 contacts substrate; the sequence is RLH. R187 serves as a coordination point for FMN.

Belongs to the pyridoxamine 5'-phosphate oxidase family. As to quaternary structure, homodimer. FMN serves as cofactor.

It carries out the reaction pyridoxamine 5'-phosphate + O2 + H2O = pyridoxal 5'-phosphate + H2O2 + NH4(+). The catalysed reaction is pyridoxine 5'-phosphate + O2 = pyridoxal 5'-phosphate + H2O2. It participates in cofactor metabolism; pyridoxal 5'-phosphate salvage; pyridoxal 5'-phosphate from pyridoxamine 5'-phosphate: step 1/1. Its pathway is cofactor metabolism; pyridoxal 5'-phosphate salvage; pyridoxal 5'-phosphate from pyridoxine 5'-phosphate: step 1/1. In terms of biological role, catalyzes the oxidation of either pyridoxine 5'-phosphate (PNP) or pyridoxamine 5'-phosphate (PMP) into pyridoxal 5'-phosphate (PLP). The chain is Pyridoxine/pyridoxamine 5'-phosphate oxidase from Allorhizobium ampelinum (strain ATCC BAA-846 / DSM 112012 / S4) (Agrobacterium vitis (strain S4)).